The following is a 404-amino-acid chain: MAEICCEVVAGSSSEGKGPECDTGSRAARRRRMEIRRLRVVAERGAEEETSGKRRRLDGGGGEASTDEEDREVERARYGFTSVCGRRRDMEDSVSACPGFLPGHHFFGVFDGHGCSHVATSCGQRMHEIVVDEAGAAAGSAGLDEEARWRGVMERSFARMDAEAVASSRGSVAPAPTCRCEMQLPKCDHVGSTAVVAVLGPRHVVVANCGDSRAVLCRGGAAIPLSCDHKPDRPDELERIHAAGGRVIFWDGARVFGMLAMSRAIGDSYLKPYVICDPEVRVMERKDGEDEFLILASDGLWDVVSNEVACNVVRACLRSSGRRERNRSSPTSNLSPRQSSSSGDEAPNDGAPSAAAGSESDEESAAEEDKACAEAAVLLTKLALARQTSDNVSVVVVNLRRRKL.

Over residues 42–52 the composition is skewed to basic and acidic residues; that stretch reads AERGAEEETSG. The tract at residues 42-72 is disordered; sequence AERGAEEETSGKRRRLDGGGGEASTDEEDRE. In terms of domain architecture, PPM-type phosphatase spans 77-399; the sequence is RYGFTSVCGR…DNVSVVVVNL (323 aa). The Mn(2+) site is built by Asp111, Gly112, and Asp298. Residues 321–369 form a disordered region; sequence GRRERNRSSPTSNLSPRQSSSSGDEAPNDGAPSAAAGSESDEESAAEED. The segment covering 330 to 343 has biased composition (polar residues); that stretch reads PTSNLSPRQSSSSG. Asp390 provides a ligand contact to Mn(2+).

This sequence belongs to the PP2C family. In terms of assembly, interacts with PYL5 and SAPK2. Binding to PYL5 is dependent on the presence of abscisic acid (ABA). Interacts with PYL3, PYL5 and PYL9. Binding to PYL5 and PYL9 is dependent on the presence of ABA. Mg(2+) serves as cofactor. Mn(2+) is required as a cofactor.

It is found in the nucleus. It catalyses the reaction O-phospho-L-seryl-[protein] + H2O = L-seryl-[protein] + phosphate. The catalysed reaction is O-phospho-L-threonyl-[protein] + H2O = L-threonyl-[protein] + phosphate. Functionally, together with ABI5, PYL5 and SAPK2, is part of an abscisic acid (ABA) signaling unit that modulates seed germination and early seedling growth. This is Probable protein phosphatase 2C 30 from Oryza sativa subsp. japonica (Rice).